The primary structure comprises 933 residues: Progesterone receptor (933 aa).

An AF3; mediates transcriptional activation region spans residues Met-1 to Leu-164. Residues Met-1–Val-256 are disordered. The modulating, Pro-Rich stretch occupies residues Met-1–Ile-566. Position 20 is a phosphoserine (Ser-20). Positions Leu-55 to Leu-59 match the LXXL motif 1 motif. Position 81 is a phosphoserine (Ser-81). The short motif at Leu-115 to Leu-119 is the LXXL motif 2 element. A phosphoserine mark is found at Ser-130 and Ser-162. Positions Met-165–His-305 are mediates transcriptional transrepression. The Nuclear localization signal signature appears at Lys-183–Arg-187. Ser-190 and Ser-213 each carry phosphoserine. The span at Glu-220–Glu-231 shows a compositional bias: acidic residues. Positions Ser-232–Gly-246 are enriched in low complexity. Ser-294 is subject to Phosphoserine; by MAPK1. Over residues Ala-335 to Gly-356 the composition is skewed to low complexity. A disordered region spans residues Ala-335–Ser-378. Ser-345 is modified (phosphoserine; by MAPK). A Glycyl lysine isopeptide (Lys-Gly) (interchain with G-Cter in SUMO); alternate cross-link involves residue Lys-388. Residue Lys-388 forms a Glycyl lysine isopeptide (Lys-Gly) (interchain with G-Cter in ubiquitin); alternate linkage. Position 400 is a phosphoserine; by CDK2 (Ser-400). Residues Pro-415 to Ser-452 are disordered. Positions Pro-418–Arg-433 are enriched in pro residues. Over residues Pro-434–Ser-452 the composition is skewed to low complexity. An AF1; mediates transcriptional activation region spans residues Ser-456–Arg-546. Residue Lys-531 forms a Glycyl lysine isopeptide (Lys-Gly) (interchain with G-Cter in SUMO) linkage. NR C4-type zinc fingers lie at residues Cys-567 to Cys-587 and Cys-603 to Cys-627. A DNA-binding region (nuclear receptor) is located at residues Cys-567–Phe-639. Ser-676 bears the Phosphoserine mark. In terms of domain architecture, NR LBD spans Gln-679–Ile-913. Residues Leu-687 to Lys-933 are AF2; mediates transcriptional activation. Position 766 (Arg-766) interacts with progesterone.

Belongs to the nuclear hormone receptor family. Interacts with SMARD1 and UNC45A. Interacts with CUEDC2; the interaction promotes ubiquitination, decreases sumoylation, and represses transcriptional activity. Interacts with PIAS3; the interaction promotes sumoylation of PR in a hormone-dependent manner, inhibits DNA-binding, and alters nuclear export. Interacts with SP1; the interaction requires ligand-induced phosphorylation on Ser-345 by ERK1/2-MAPK. Interacts with PRMT2. Interacts with NCOA2 and NCOA1. Interacts with KLF9. Interacts with GTF2B. In terms of processing, phosphorylated on multiple serine sites. Several of these sites are hormone-dependent. Phosphorylation on Ser-294 is highly hormone-dependent and modulates ubiquitination and sumoylation on Lys-388. Phosphorylation on Ser-102 and Ser-345 requires induction by hormone. Basal phosphorylation on Ser-81, Ser-162, Ser-190 and Ser-400 is increased in response to progesterone and can be phosphorylated in vitro by the CDK2-A1 complex. Increased levels of phosphorylation on Ser-400 also in the presence of EGF, heregulin, IGF, PMA and FBS. Phosphorylation at this site by CDK2 is ligand-independent, and increases nuclear translocation and transcriptional activity. Phosphorylation at Ser-162 and Ser-294, but not at Ser-190, is impaired during the G(2)/M phase of the cell cycle. Phosphorylation on Ser-345 by ERK1/2 MAPK is required for interaction with SP1. Sumoylation is hormone-dependent and represses transcriptional activity. Sumoylation on all three sites is enhanced by PIAS3. Desumoylated by SENP1. Sumoylation on Lys-388, the main site of sumoylation, is repressed by ubiquitination on the same site, and modulated by phosphorylation at Ser-294. Post-translationally, ubiquitination is hormone-dependent and represses sumoylation on the same site. Promoted by MAPK-mediated phosphorylation on Ser-294. Ubiquitinated by UBR5, leading to its degradation: UBR5 specifically recognizes and binds ligand-bound PGR when it is not associated with coactivators (NCOAs). In presence of NCOAs, the UBR5-degron is not accessible, preventing its ubiquitination and degradation. In terms of processing, palmitoylated by ZDHHC7 and ZDHHC21. Palmitoylation is required for plasma membrane targeting and for rapid intracellular signaling via ERK and AKT kinases and cAMP generation.

Its subcellular location is the nucleus. It is found in the cytoplasm. Its function is as follows. The steroid hormones and their receptors are involved in the regulation of eukaryotic gene expression and affect cellular proliferation and differentiation in target tissues. Transcriptional activator of several progesteron-dependent promoters in a variety of cell types. Involved in activation of SRC-dependent MAPK signaling on hormone stimulation. The chain is Progesterone receptor (PGR) from Pan troglodytes (Chimpanzee).